The chain runs to 29 residues: Cytochrome b6-f complex subunit 8 (29 aa).

Residues 3–23 form a helical membrane-spanning segment; sequence IVDIAWAALMVVFTFSLSLVV.

This sequence belongs to the PetN family. In terms of assembly, the 4 large subunits of the cytochrome b6-f complex are cytochrome b6, subunit IV (17 kDa polypeptide, PetD), cytochrome f and the Rieske protein, while the 4 small subunits are PetG, PetL, PetM and PetN. The complex functions as a dimer.

It localises to the plastid. Its subcellular location is the chloroplast thylakoid membrane. Component of the cytochrome b6-f complex, which mediates electron transfer between photosystem II (PSII) and photosystem I (PSI), cyclic electron flow around PSI, and state transitions. This chain is Cytochrome b6-f complex subunit 8, found in Gnetum parvifolium (Small-leaved jointfir).